Consider the following 1163-residue polypeptide: Actin cross-linking toxin VgrG1 (1163 aa).

The region spanning 728–1163 (TPDFPTHFPK…NPQEWQRIIA (436 aa)) is the ACD domain. 739 to 743 (SIGIE) is a binding site for ATP. Residues Glu-743 and Glu-805 each contribute to the Mg(2+) site. Ser-808 contacts ATP. Position 889 (Gln-889) interacts with Mg(2+). Position 995 (Arg-995) interacts with ATP. Glu-1066 contacts Mg(2+).

It belongs to the VgrG protein family. In terms of assembly, interacts with protein VC1417. Mg(2+) serves as cofactor.

It localises to the secreted. Its subcellular location is the host cytoplasm. The protein resides in the host cytosol. In terms of biological role, part of the type VI secretion system (T6SS) specialized secretion system, which delivers several virulence factors in both prokaryotic and eukaryotic cells during infection. Forms the spike at the tip of the elongating tube probably formed by hemolysin co-regulated protein/Hcp. Allows the delivery of the TseL antibacterial toxin to target cells where it exerts its toxicity. Also acts directly as an actin-directed toxin that catalyzes the covalent cross-linking of host cytoplasmic monomeric actin. Mediates the cross-link between 'Lys-50' of one monomer and 'Glu-270' of another actin monomer, resulting in formation of highly toxic actin oligomers that cause cell rounding. The toxin can be highly efficient at very low concentrations by acting on formin homology family proteins: toxic actin oligomers bind with high affinity to formins and adversely affect both nucleation and elongation abilities of formins, causing their potent inhibition in both profilin-dependent and independent manners. Acts as an acid--amino-acid ligase that transfers the gamma-phosphoryl group of ATP to the 'Glu-270' actin residue, resulting in the formation of an activated acyl phosphate intermediate. This intermediate is further hydrolyzed and the energy of hydrolysis is utilized for the formation of the amide bond between actin subunits. In Vibrio cholerae serotype O1 (strain ATCC 39315 / El Tor Inaba N16961), this protein is Actin cross-linking toxin VgrG1.